Reading from the N-terminus, the 86-residue chain is MKTLLLTLVVVTIVCLDLGYTLTCVTTKSIGGVTTEDCPAGQNVCFKRWHYVTPKNYDIIKGCAATCPKVDNNDPIRCCGTDKCND.

An N-terminal signal peptide occupies residues 1-21; that stretch reads MKTLLLTLVVVTIVCLDLGYT. 4 disulfides stabilise this stretch: C24–C45, C38–C63, C67–C78, and C79–C84.

It belongs to the three-finger toxin family. Short-chain subfamily. Aminergic toxin sub-subfamily. In terms of assembly, monomer. In terms of tissue distribution, expressed by the venom gland.

The protein resides in the secreted. Binds irreversibly to M1 (CHRM1) muscarinic acetylcholine receptors, and reveals a slightly weaker effect on M3 (CHRM3) receptors. The mechanism of toxin-receptor interaction comprises at least two steps. The first step is fast with no competition between the toxin and the antagonist. The second step is slow with formation of a more stable toxin-receptor complex and inhibition of the antagonist binding. The sequence is that of Muscarinic toxin 2 from Dendroaspis angusticeps (Eastern green mamba).